The sequence spans 482 residues: MSEISKNEALILKYLASKNQEIEESNIEIKGLSRQDIASATSWLQVKGLIDVKTREEVAYVLTDEGKRYAENGLPELRAYSILKRKGKLSLRDLQEAMPDEYKIVLAQLAKFGITPKNGVLEYSDGHIEAEISRRQRFLSDLNTDDQEMIEHFKRRKNVIEEKKRSVRIVSINSKGLEQLNNFDQFEAIGEIDSGIITSQAWKTAPFRKYDLDAPVSPTKSYAKHPLVYFINEIRRIFLDMGFTEMSGHYIESALWDMDALFIPQDHPARDMQDTFYVKDSNFTIEHPEIEKRIKRIHERGFDGYSGWGYRWSSDDGKKLILRTHTTVTTARYLYEHNTYPQAIFSVEKVFRHESVDWKHLAEFYQIEGAVYDKNVSVATLKWILRTFYGKLGFEKIRLVPSYYPYTEPSLDVVVEVDGKEMELGGSGIFRPEVGKILGLKAPVMAWGMGLERLAMLYYGLTDVRDLYNTDFSFLEGYKIKY.

Residues threonine 327, 366-368 (QIE), and tyrosine 406 each bind L-phenylalanine. Glutamate 408 contributes to the Mg(2+) binding site. Phenylalanine 430 contacts L-phenylalanine.

Belongs to the class-II aminoacyl-tRNA synthetase family. Phe-tRNA synthetase alpha subunit type 2 subfamily. Tetramer of two alpha and two beta subunits. Mg(2+) serves as cofactor.

The protein resides in the cytoplasm. The enzyme catalyses tRNA(Phe) + L-phenylalanine + ATP = L-phenylalanyl-tRNA(Phe) + AMP + diphosphate + H(+). This Thermoplasma volcanium (strain ATCC 51530 / DSM 4299 / JCM 9571 / NBRC 15438 / GSS1) protein is Phenylalanine--tRNA ligase alpha subunit.